The following is a 356-amino-acid chain: NADH-quinone oxidoreductase subunit H (356 aa).

The next 8 membrane-spanning stretches (helical) occupy residues 4 to 24 (ALIL…LTGV), 79 to 99 (LLAP…IPFG), 127 to 147 (GVLY…IAGW), 166 to 186 (ISYE…TGSL), 198 to 218 (MWNI…TAMF), 251 to 271 (FFLA…LLFF), 289 to 309 (FIGL…FIWV), and 329 to 349 (MIPW…YWKE).

Belongs to the complex I subunit 1 family. NDH-1 is composed of 14 different subunits. Subunits NuoA, H, J, K, L, M, N constitute the membrane sector of the complex.

Its subcellular location is the cell inner membrane. The catalysed reaction is a quinone + NADH + 5 H(+)(in) = a quinol + NAD(+) + 4 H(+)(out). NDH-1 shuttles electrons from NADH, via FMN and iron-sulfur (Fe-S) centers, to quinones in the respiratory chain. The immediate electron acceptor for the enzyme in this species is believed to be ubiquinone. Couples the redox reaction to proton translocation (for every two electrons transferred, four hydrogen ions are translocated across the cytoplasmic membrane), and thus conserves the redox energy in a proton gradient. This subunit may bind ubiquinone. The chain is NADH-quinone oxidoreductase subunit H from Leptospira biflexa serovar Patoc (strain Patoc 1 / ATCC 23582 / Paris).